The primary structure comprises 250 residues: AA9 family lytic polysaccharide monooxygenase F (250 aa).

The signal sequence occupies residues 1 to 21; it reads MAMSKIATLAGLLASAGLVAG. His-22 lines the Cu(2+) pocket. An O2-binding site is contributed by Asp-51. Intrachain disulfides connect Cys-77–Cys-200 and Cys-121–Cys-125. Position 107 (His-107) interacts with Cu(2+). Residues His-186 and Gln-195 each coordinate O2. A Cu(2+)-binding site is contributed by Tyr-197.

It belongs to the glycosyl hydrolase 61 family. Cu(2+) serves as cofactor.

Its subcellular location is the secreted. The catalysed reaction is Endohydrolysis of (1-&gt;4)-beta-D-glucosidic linkages in cellulose, lichenin and cereal beta-D-glucans.. Functionally, lytic polysaccharide monooxygenase (LMPO) that depolymerizes crystalline and amorphous polysaccharides via the oxidation of scissile alpha- or beta-(1-4)-glycosidic bonds, yielding C1 or C4 oxidation products. Catalysis by LPMOs requires the reduction of the active-site copper from Cu(II) to Cu(I) by a reducing agent and H(2)O(2) or O(2) as a cosubstrate. Major secreted component of the extracellular cellulolytic system. The chain is AA9 family lytic polysaccharide monooxygenase F from Emericella nidulans (strain FGSC A4 / ATCC 38163 / CBS 112.46 / NRRL 194 / M139) (Aspergillus nidulans).